We begin with the raw amino-acid sequence, 428 residues long: Histidine--tRNA ligase (428 aa).

This sequence belongs to the class-II aminoacyl-tRNA synthetase family. As to quaternary structure, homodimer.

Its subcellular location is the cytoplasm. The enzyme catalyses tRNA(His) + L-histidine + ATP = L-histidyl-tRNA(His) + AMP + diphosphate + H(+). This is Histidine--tRNA ligase from Halalkalibacterium halodurans (strain ATCC BAA-125 / DSM 18197 / FERM 7344 / JCM 9153 / C-125) (Bacillus halodurans).